Here is a 376-residue protein sequence, read N- to C-terminus: Chorismate synthase (376 aa).

Arg39 and Arg45 together coordinate NADP(+). Residues 115 to 117 (RSS), Gly276, 291 to 295 (KPIPT), and Arg317 each bind FMN.

This sequence belongs to the chorismate synthase family. Homotetramer. FMNH2 is required as a cofactor.

The catalysed reaction is 5-O-(1-carboxyvinyl)-3-phosphoshikimate = chorismate + phosphate. It functions in the pathway metabolic intermediate biosynthesis; chorismate biosynthesis; chorismate from D-erythrose 4-phosphate and phosphoenolpyruvate: step 7/7. In terms of biological role, catalyzes the anti-1,4-elimination of the C-3 phosphate and the C-6 proR hydrogen from 5-enolpyruvylshikimate-3-phosphate (EPSP) to yield chorismate, which is the branch point compound that serves as the starting substrate for the three terminal pathways of aromatic amino acid biosynthesis. This reaction introduces a second double bond into the aromatic ring system. This Thermotoga maritima (strain ATCC 43589 / DSM 3109 / JCM 10099 / NBRC 100826 / MSB8) protein is Chorismate synthase.